Consider the following 326-residue polypeptide: D-alanine--D-alanine ligase (326 aa).

Positions 114–313 (KRVWLQHGLR…YAELCVSIVS (200 aa)) constitute an ATP-grasp domain. 140 to 195 (PDRLGLPLILKPPHEGSTVGITKVAGYSDMKEGYAQAAKFDDEVLAEQFIAGRELT) is a binding site for ATP. 3 residues coordinate Mg(2+): D267, E280, and N282.

Belongs to the D-alanine--D-alanine ligase family. Mg(2+) is required as a cofactor. The cofactor is Mn(2+).

Its subcellular location is the cytoplasm. It carries out the reaction 2 D-alanine + ATP = D-alanyl-D-alanine + ADP + phosphate + H(+). The protein operates within cell wall biogenesis; peptidoglycan biosynthesis. Functionally, cell wall formation. This is D-alanine--D-alanine ligase from Bordetella petrii (strain ATCC BAA-461 / DSM 12804 / CCUG 43448).